The sequence spans 124 residues: ATP synthase epsilon chain (124 aa).

The protein belongs to the ATPase epsilon chain family. F-type ATPases have 2 components, CF(1) - the catalytic core - and CF(0) - the membrane proton channel. CF(1) has five subunits: alpha(3), beta(3), gamma(1), delta(1), epsilon(1). CF(0) has three main subunits: a, b and c.

Its subcellular location is the cell membrane. Functionally, produces ATP from ADP in the presence of a proton gradient across the membrane. In Streptomyces griseus subsp. griseus (strain JCM 4626 / CBS 651.72 / NBRC 13350 / KCC S-0626 / ISP 5235), this protein is ATP synthase epsilon chain.